The primary structure comprises 463 residues: Probable diacyglycerol O-acyltransferase tgs1 (463 aa).

Methionine 1 carries the N-acetylmethionine modification. Histidine 137 (proton acceptor) is an active-site residue.

This sequence belongs to the long-chain O-acyltransferase family.

The catalysed reaction is an acyl-CoA + a 1,2-diacyl-sn-glycerol = a triacyl-sn-glycerol + CoA. The enzyme catalyses di-(9Z)-octadecenoylglycerol + (9Z)-octadecenoyl-CoA = 1,2,3-tri-(9Z-octadecenoyl)-glycerol + CoA. The protein operates within glycerolipid metabolism; triacylglycerol biosynthesis. In terms of biological role, catalyzes the terminal and only committed step in triacylglycerol synthesis by using diacylglycerol and fatty acyl CoA as substrates. Required for storage lipid synthesis. Upon expression in E.coli functions as a triacylglycerol synthase, making triacylglycerol (TG) from diolein and long-chain fatty acyl-CoA. Prefers C(26:0)-CoA over C(18:1)-CoA. TG synthesis activity increases in M.tuberculosis upon oxygen depletion and NO treatment, with concomitant accumulation of TG in inclusion bodies. As disruption of the gene encoding this protein obviates TG synthesis this seems to be the major enzyme involved in production of TG. Has no wax synthase activity to produce wax esters. This Mycobacterium tuberculosis (strain ATCC 25618 / H37Rv) protein is Probable diacyglycerol O-acyltransferase tgs1 (tgs1).